We begin with the raw amino-acid sequence, 631 residues long: MGLDVRNNGNDNVEIRAAETRTAQRADEALETAADFAGQPKVTHTMRTINRTLSRRISRNTGSEQVLNLRRLMEKYLEDTRFKDDFIFVAVDPNQYSVPYPTLVVMSGAKVGDHNHFFGYVLPLVAGLAPLPRREEQGPHGNILVPRTWVDNLNGTFINEVMAAMYAAIGGKSNGTARIAGLAVVTNEITAESAHLATTLLSAADNAIQTAIEIRLGDKLGLPQFNLGMMASDQPISSVQYNTSGMQDSDIVGNPVRSDITVTISNRIRQAMSDYDSQQRLVATTGYIDLTYSPQNPTFNQGPVLVNGYPVPPTVQYQPRYVMTSAYPLELDAFTPNTFVLGLIGTIATLNSGMAWAQSLISNAARGIGPHNPGALAMVLDPEVTAPLDLSTQTNEQIYKFLQQVLYPSLLISIDVPEEGEYSWLLRMIPAAEKIYTGKVEGEVREISEGYKALYRAFDDVTLGCFSKKYQYGLPLVYATGNRIPLGHYNHQDGHRHDIRDMDDLYMMNITNPDTVEAWEDSFDRTDMTMSQRVVARHEIIDRVLSGSWEQTGWAMRYDFDPLALQALIEAAADAGFTIRPENIQHLAGTAVRGNMAARARGLGNISGNIYARSDRPNVGVNNMGGAFNLF.

As to quaternary structure, homotetramer. The tetrameric protomers further assemble as a square grid.

Its subcellular location is the host cytoplasm. Functionally, self-assembles to form a proteinaceous shell that encloses the viral DNA and compartmentalizes proteins and DNA during viral infection. This micrometer-scale compartment contains narrow pores and is the site of viral replication, with the proteins involved in DNA replication localized inside. Provides a surface for docking of capsids during packaging. Probably protects the viral genome against host defenses. The sequence is that of Chimallin from Escherichia coli.